The following is a 794-amino-acid chain: Sucrose synthase (794 aa).

Positions 263–742 (MISRLLILSP…ALDRVASRYT (480 aa)) are GT-B glycosyltransferase.

This sequence belongs to the glycosyltransferase 1 family. As to quaternary structure, homotetramer.

It carries out the reaction an NDP-alpha-D-glucose + D-fructose = a ribonucleoside 5'-diphosphate + sucrose + H(+). The catalysed reaction is ADP-alpha-D-glucose + D-fructose = sucrose + ADP + H(+). Inhibited by GDP over 10 mM and by over 2 mM MgCl(2). In terms of biological role, catalyzes the reversible conversion of sucrose and a nucleotide disphosphate (NDP) into fructose and NDP-glucose; although the reaction is freely reversible in vitro, the physiological reaction seems to be sucrose cleavage. Unlike characterized plant enzymes prefers ADP as a cosubstrate, whereas plants prefer UDP. The KM for sucrose is 8-fold lower in the presence of ADP than UDP. Its preference for ADP over UDP suggests it may directly link sucrose and glycogen metabolism. This is Sucrose synthase (ss2) from Nitrosomonas europaea (strain ATCC 19718 / CIP 103999 / KCTC 2705 / NBRC 14298).